A 78-amino-acid polypeptide reads, in one-letter code: MRPIIEFCLSNLASGSHDAMEELEKDPNLDIIEYGCLNHCGTCALDHFALVNGEYIAGDTPEELVSNIYKYLEENPMF.

This sequence belongs to the UPF0349 family.

The polypeptide is UPF0349 protein ABC2936 (Shouchella clausii (strain KSM-K16) (Alkalihalobacillus clausii)).